A 224-amino-acid polypeptide reads, in one-letter code: Large ribosomal subunit protein uL1 (224 aa).

It belongs to the universal ribosomal protein uL1 family. Part of the 50S ribosomal subunit.

Functionally, binds directly to 23S rRNA. The L1 stalk is quite mobile in the ribosome, and is involved in E site tRNA release. Its function is as follows. Protein L1 is also a translational repressor protein, it controls the translation of the L11 operon by binding to its mRNA. This Borrelia recurrentis (strain A1) protein is Large ribosomal subunit protein uL1.